Consider the following 470-residue polypeptide: MSSDAASPVVTRIAPSPTGTMHIGTARTGLFNWLFARKHGGKFVLRIEDTDRERSTPEATQAILDGMAWLGLDYDGEAVSQFARADRHREVAEQMLAEGHAYKCFSTQDEIAAFRDAAKADGRSTLFLSPWREASDHPDAPYVIRLKAPRDGTTVIRDRVQSDVTIQNATLDDMILLRSDGTPTYMHAVVVDDHDMGVTHVVRGDDHLNNAARQIQIYAAMGWAEPVWSHIPLIHGDDGKKLSKRHGATGVMEYAEMGIPAAAMRNYLTRLGWSHGDEELFTDEQARDWFDLDGIGKSPSRLDMKKLANVTGWHIARTDDADLVAQIEGYLALTGAPALSQAQHDGLTRAMYCLKDRAKSLPDLLDKGRFVLENRPFDYDEKSVTMLDPVSRSILRELTAQLQNARWTRDTLEGVLNAAADSHGLKFGKLAGPLRAALSGRSVSPSVFDMMLVIGRDETLARLDEAASLT.

A 'HIGH' region motif is present at residues 15 to 25; sequence PSPTGTMHIGT. Residues 241–245 carry the 'KMSKS' region motif; that stretch reads KLSKR. Lys244 lines the ATP pocket.

This sequence belongs to the class-I aminoacyl-tRNA synthetase family. Glutamate--tRNA ligase type 1 subfamily. Monomer.

The protein localises to the cytoplasm. The enzyme catalyses tRNA(Glu) + L-glutamate + ATP = L-glutamyl-tRNA(Glu) + AMP + diphosphate. In terms of biological role, catalyzes the attachment of glutamate to tRNA(Glu) in a two-step reaction: glutamate is first activated by ATP to form Glu-AMP and then transferred to the acceptor end of tRNA(Glu). The chain is Glutamate--tRNA ligase 1 from Jannaschia sp. (strain CCS1).